The primary structure comprises 429 residues: Methylenetetrahydrofolate--tRNA-(uracil-5-)-methyltransferase TrmFO (429 aa).

Residue 7–12 participates in FAD binding; the sequence is GAGLAG.

Belongs to the MnmG family. TrmFO subfamily. FAD is required as a cofactor.

The protein resides in the cytoplasm. It catalyses the reaction uridine(54) in tRNA + (6R)-5,10-methylene-5,6,7,8-tetrahydrofolate + NADH + H(+) = 5-methyluridine(54) in tRNA + (6S)-5,6,7,8-tetrahydrofolate + NAD(+). The catalysed reaction is uridine(54) in tRNA + (6R)-5,10-methylene-5,6,7,8-tetrahydrofolate + NADPH + H(+) = 5-methyluridine(54) in tRNA + (6S)-5,6,7,8-tetrahydrofolate + NADP(+). Its function is as follows. Catalyzes the folate-dependent formation of 5-methyl-uridine at position 54 (M-5-U54) in all tRNAs. In Thermosipho africanus (strain TCF52B), this protein is Methylenetetrahydrofolate--tRNA-(uracil-5-)-methyltransferase TrmFO.